Reading from the N-terminus, the 282-residue chain is Protease HtpX homolog (282 aa).

The next 2 helical transmembrane spans lie at 6–26 (TFILMTFLALIFMFFGGLIGG) and 28–48 (QGVIIAFVVALGMNFFSYFFS). Residue His-130 participates in Zn(2+) binding. Residue Glu-131 is part of the active site. A Zn(2+)-binding site is contributed by His-134. The next 2 helical transmembrane spans lie at 140-160 (ILIGSVAAVFAGAIAILANFA) and 177-197 (ILMIVAAIIMPIAAAIIQMAI). Residue Glu-202 coordinates Zn(2+).

This sequence belongs to the peptidase M48B family. Zn(2+) is required as a cofactor.

It is found in the cell inner membrane. The protein is Protease HtpX homolog of Campylobacter hominis (strain ATCC BAA-381 / DSM 21671 / CCUG 45161 / LMG 19568 / NCTC 13146 / CH001A).